A 1280-amino-acid polypeptide reads, in one-letter code: Ankyrin repeat and sterile alpha motif domain-containing protein 1B (1280 aa).

ANK repeat units lie at residues Gly2–Gly31, Ser57–Val86, Lys90–Arg119, Glu126–Met155, Arg159–Ser188, Arg192–Thr221, and Glu224–Ile253. Disordered regions lie at residues Arg299–Lys322, Met361–Ser399, Ser479–Ser573, Asn704–Gly723, and Ser755–Thr791. The segment covering Asp482–Asp491 has biased composition (basic and acidic residues). Composition is skewed to polar residues over residues Lys520–Gly550, Ala707–Gly723, and Ser770–Ser782. SAM domains are found at residues Cys824 to Val890 and Asn898 to Glu963. 2 disordered regions span residues Arg960–Ala994 and Gly1208–Lys1243. Positions Gly980–Ala994 are enriched in polar residues. The PID domain maps to Ile1071–Pro1223.

Its subcellular location is the cytoplasm. This is Ankyrin repeat and sterile alpha motif domain-containing protein 1B (anks1b) from Danio rerio (Zebrafish).